Reading from the N-terminus, the 159-residue chain is E3 ubiquitin ligase complex SCF subunit sconC (159 aa).

Residues 101–159 form an interaction with the F-box domain of F-box proteins region; the sequence is ILAANYLDIKALLDVGCKTVANMIKGKSPEEIRKTFNIQNDFTPEEEDQIRRENEWAEE.

The protein belongs to the SKP1 family. In terms of assembly, component of the SCF (SKP1-CUL1-F-box protein) E3 ubiquitin ligase complexes.

It participates in protein modification; protein ubiquitination. In terms of biological role, essential component of the SCF (SKP1-CUL1-F-box protein) E3 ubiquitin ligase complexes, which mediate the ubiquitination and subsequent proteasomal degradation of target proteins. Controls sulfur metabolite repression, probably by mediating the inactivation or degradation of the metR transcription factor. The chain is E3 ubiquitin ligase complex SCF subunit sconC (sconC) from Aspergillus clavatus (strain ATCC 1007 / CBS 513.65 / DSM 816 / NCTC 3887 / NRRL 1 / QM 1276 / 107).